A 128-amino-acid polypeptide reads, in one-letter code: Aspartate 1-decarboxylase (128 aa).

Serine 25 serves as the catalytic Schiff-base intermediate with substrate; via pyruvic acid. Serine 25 bears the Pyruvic acid (Ser) mark. A substrate-binding site is contributed by threonine 57. Residue tyrosine 58 is the Proton donor of the active site. 73–75 (GAA) serves as a coordination point for substrate.

The protein belongs to the PanD family. In terms of assembly, heterooctamer of four alpha and four beta subunits. Pyruvate serves as cofactor. In terms of processing, is synthesized initially as an inactive proenzyme, which is activated by self-cleavage at a specific serine bond to produce a beta-subunit with a hydroxyl group at its C-terminus and an alpha-subunit with a pyruvoyl group at its N-terminus.

It localises to the cytoplasm. It carries out the reaction L-aspartate + H(+) = beta-alanine + CO2. Its pathway is cofactor biosynthesis; (R)-pantothenate biosynthesis; beta-alanine from L-aspartate: step 1/1. In terms of biological role, catalyzes the pyruvoyl-dependent decarboxylation of aspartate to produce beta-alanine. This chain is Aspartate 1-decarboxylase, found in Staphylococcus epidermidis (strain ATCC 35984 / DSM 28319 / BCRC 17069 / CCUG 31568 / BM 3577 / RP62A).